The following is a 303-amino-acid chain: Mitochondrial basic amino acids transporter (303 aa).

The next 6 helical transmembrane spans lie at 2–22, 61–81, 96–116, 153–172, 187–207, and 255–275; these read ALDFLAGCAGGVAGVLVGHPF, GLGSPLMGLTFINALVFGVQG, FLAGAAAGAIQCVICCPMELA, GMVSTLLRETPSFGVYFLTY, LLVPKLLLAGGTSGIVSWLST, and LLRAFPVNAATFATVTVVLTY. Solcar repeat units follow at residues 2-86, 90-178, and 185-275; these read ALDF…TLRA, DSPL…LTRA, and DRLL…VLTY. The tract at residues 282 to 303 is disordered; the sequence is GPEGEAVPAAPAGPALAQPSSL. Positions 284–303 are enriched in low complexity; the sequence is EGEAVPAAPAGPALAQPSSL.

It belongs to the mitochondrial carrier (TC 2.A.29) family.

The protein resides in the mitochondrion inner membrane. It catalyses the reaction L-lysine(out) + L-arginine(in) = L-lysine(in) + L-arginine(out). The enzyme catalyses L-histidine(out) + L-arginine(in) = L-histidine(in) + L-arginine(out). The catalysed reaction is L-ornithine(in) + L-arginine(out) = L-ornithine(out) + L-arginine(in). It carries out the reaction L-homoarginine(in) + L-arginine(out) = L-homoarginine(out) + L-arginine(in). It catalyses the reaction N(omega)-methyl-L-arginine(in) + L-arginine(out) = N(omega)-methyl-L-arginine(out) + L-arginine(in). The enzyme catalyses L-arginine(in) = L-arginine(out). The catalysed reaction is L-lysine(in) = L-lysine(out). It carries out the reaction L-ornithine(in) = L-ornithine(out). It catalyses the reaction L-histidine(out) = L-histidine(in). Its function is as follows. Mitochondrial transporter of arginine, lysine, homoarginine, methylarginine and, to a much lesser extent, ornithine and histidine. Does not transport carnitine nor acylcarnitines. Functions by both counter-exchange and uniport mechanisms. Plays a physiological role in the import of basic amino acids into mitochondria for mitochondrial protein synthesis and amino acid degradation. This Homo sapiens (Human) protein is Mitochondrial basic amino acids transporter.